The primary structure comprises 317 residues: Ribosomal protein L11 methyltransferase (317 aa).

Positions 158, 179, 201, and 244 each coordinate S-adenosyl-L-methionine.

Belongs to the methyltransferase superfamily. PrmA family.

The protein resides in the cytoplasm. The catalysed reaction is L-lysyl-[protein] + 3 S-adenosyl-L-methionine = N(6),N(6),N(6)-trimethyl-L-lysyl-[protein] + 3 S-adenosyl-L-homocysteine + 3 H(+). In terms of biological role, methylates ribosomal protein L11. The sequence is that of Ribosomal protein L11 methyltransferase from Streptococcus uberis (strain ATCC BAA-854 / 0140J).